Reading from the N-terminus, the 520-residue chain is Solute carrier family 2, facilitated glucose transporter member 14 (520 aa).

At 1-29 (MEFHNGGHVSGIGGFLVSLTSRMKPHTLA) the chain is on the cytoplasmic side. A helical membrane pass occupies residues 30–50 (VTPALIFAITVATIGSFQFGY). Over 51–88 (NTGVINAPETIIKEFINKTLTDKANAPPSEVLLTNLWS) the chain is Extracellular. Asparagine 67 carries an N-linked (GlcNAc...) asparagine glycan. Residues 89–109 (LSVAIFSVGGMIGSFSVGLFV) traverse the membrane as a helical segment. The Cytoplasmic portion of the chain corresponds to 110-117 (NRFGRRNS). Residues 118–138 (MLIVNLLAATGGCLMGLCKIA) traverse the membrane as a helical segment. Over 139–148 (ESVEMLILGR) the chain is Extracellular. Residues 149 to 169 (LVIGLFCGLCTGFVPMYIGEI) form a helical membrane-spanning segment. Topologically, residues 170–177 (SPTALRGA) are cytoplasmic. Residues 178-198 (FGTLNQLGIVIGILVAQIFGL) form a helical membrane-spanning segment. Glutamine 183 contacts D-glucose. Over 199–207 (ELILGSEEL) the chain is Extracellular. A helical transmembrane segment spans residues 208–228 (WPVLLGFTILPAILQSAALPC). Over 229–293 (CPESPRFLLI…LFRVSSYRQP (65 aa)) the chain is Cytoplasmic. Residues 294–314 (IIISIVLQLSQQLSGINAVFY) traverse the membrane as a helical segment. D-glucose-binding positions include 304-305 (QQ) and asparagine 310. Residues 315-328 (YSTGIFKDAGVQQP) lie on the Extracellular side of the membrane. Residues 329–349 (IYATISAGVVNTIFTLLSLFL) traverse the membrane as a helical segment. Residue asparagine 339 participates in D-glucose binding. The Cytoplasmic segment spans residues 350–358 (VERAGRRTL). A helical membrane pass occupies residues 359–379 (HMIGLGGMAFCSTLMTVSLLL). The Extracellular segment spans residues 380–392 (KNHYNGMSFVCIG). The helical transmembrane segment at 393-413 (AILVFVACFEIGPGPIPWFIV) threads the bilayer. Residues glutamate 402 and tryptophan 410 each contribute to the D-glucose site. Topologically, residues 414-423 (AELFSQGPRP) are cytoplasmic. Residues 424-444 (AAMAVAGCSNWTSNFLVGLLF) traverse the membrane as a helical segment. The Extracellular portion of the chain corresponds to 445–451 (PSAAYYL). The helical transmembrane segment at 452–472 (GAYVFIIFTGFLITFLAFTFF) threads the bilayer. At 473–520 (KVPETRGRTFEDITRAFEGQAHGADRSGKDGVMGMNSIEPAKETTTNV) the chain is on the cytoplasmic side. Residues 493–520 (AHGADRSGKDGVMGMNSIEPAKETTTNV) are disordered.

It belongs to the major facilitator superfamily. Sugar transporter (TC 2.A.1.1) family. Glucose transporter subfamily. In terms of tissue distribution, mainly expressed in testis. Also expressed in small intestine, liver and kidney.

The protein resides in the cell membrane. It catalyses the reaction D-glucose(out) = D-glucose(in). The catalysed reaction is L-dehydroascorbate(out) = L-dehydroascorbate(in). Functionally, hexose transporter that can mediate the transport of glucose and dehydroascorbate across the cell membrane. The protein is Solute carrier family 2, facilitated glucose transporter member 14 of Homo sapiens (Human).